The sequence spans 417 residues: Serine hydroxymethyltransferase 2 (417 aa).

Residues L121 and 125–127 (GHL) each bind (6S)-5,6,7,8-tetrahydrofolate. N6-(pyridoxal phosphate)lysine is present on K230. 355 to 357 (SPF) serves as a coordination point for (6S)-5,6,7,8-tetrahydrofolate.

Belongs to the SHMT family. As to quaternary structure, homodimer. Requires pyridoxal 5'-phosphate as cofactor.

It localises to the cytoplasm. It carries out the reaction (6R)-5,10-methylene-5,6,7,8-tetrahydrofolate + glycine + H2O = (6S)-5,6,7,8-tetrahydrofolate + L-serine. Its pathway is one-carbon metabolism; tetrahydrofolate interconversion. It functions in the pathway amino-acid biosynthesis; glycine biosynthesis; glycine from L-serine: step 1/1. In terms of biological role, catalyzes the reversible interconversion of serine and glycine with tetrahydrofolate (THF) serving as the one-carbon carrier. This reaction serves as the major source of one-carbon groups required for the biosynthesis of purines, thymidylate, methionine, and other important biomolecules. Also exhibits THF-independent aldolase activity toward beta-hydroxyamino acids, producing glycine and aldehydes, via a retro-aldol mechanism. The chain is Serine hydroxymethyltransferase 2 from Pseudomonas savastanoi pv. phaseolicola (strain 1448A / Race 6) (Pseudomonas syringae pv. phaseolicola (strain 1448A / Race 6)).